A 362-amino-acid polypeptide reads, in one-letter code: Heme A synthase (362 aa).

5 consecutive transmembrane segments (helical) span residues 12-32, 102-122, 128-148, 159-179, and 198-218; these read AVKI…LVGG, VIGL…HLGG, LWLI…MVAS, ERLA…VWTL, and AAAL…VAGL. Histidine 262 contributes to the heme binding site. Transmembrane regions (helical) follow at residues 264–286, 291–311, and 314–334; these read MLAY…ARAG, GAVW…FTLL, and VPIG…MLGV. Histidine 322 is a binding site for heme.

Belongs to the COX15/CtaA family. Type 2 subfamily. Interacts with CtaB. It depends on heme b as a cofactor.

The protein resides in the cell membrane. It carries out the reaction Fe(II)-heme o + 2 A + H2O = Fe(II)-heme a + 2 AH2. It participates in porphyrin-containing compound metabolism; heme A biosynthesis; heme A from heme O: step 1/1. Functionally, catalyzes the conversion of heme O to heme A by two successive hydroxylations of the methyl group at C8. The first hydroxylation forms heme I, the second hydroxylation results in an unstable dihydroxymethyl group, which spontaneously dehydrates, resulting in the formyl group of heme A. The sequence is that of Heme A synthase from Rhodopseudomonas palustris (strain BisA53).